Here is an 863-residue protein sequence, read N- to C-terminus: Leucine--tRNA ligase (863 aa).

The 'HIGH' region motif lies at 40-51; the sequence is PYPSGAGLHVGH. The 'KMSKS' region motif lies at 635-639; sequence KMSKS. ATP is bound at residue K638.

This sequence belongs to the class-I aminoacyl-tRNA synthetase family.

It localises to the cytoplasm. The enzyme catalyses tRNA(Leu) + L-leucine + ATP = L-leucyl-tRNA(Leu) + AMP + diphosphate. In Leptospira interrogans serogroup Icterohaemorrhagiae serovar Lai (strain 56601), this protein is Leucine--tRNA ligase.